Reading from the N-terminus, the 299-residue chain is MSETTKDDGSSQKKSVRKEKRAYVLRKWTQFDVGRASTVGTVHLLCLLAPFNYKWEAFRFGIILAILTNLCITFSYHRNLTHRSFKLPKWLEYPFAYSALLALQGDPLDWVSIHRFHHQFTDSDRDPHSPIEGFWFSHVLWIFDTDYIREKCGRRNNVMDLKQQWFYRFLKKTLVLHILAFWTLIYLWGGLPYLTWTVGFGGVIGYHGTWLVNSACHICGSQAWQTNDTSRNVWWLALLTMGESWHNNHHAFETSARHGLEWYQLDITWYLIWFFQALGLATNVKLPTDAQKRKMAIRR.

Residues 55–75 (WEAFRFGIILAILTNLCITFS) form a helical membrane-spanning segment. Positions 77–82 (HRNLTH) match the Histidine box-1 motif. The Histidine box-2 signature appears at 114–118 (HRFHH). A helical membrane pass occupies residues 174 to 194 (LVLHILAFWTLIYLWGGLPYL). A Histidine box-3 motif is present at residues 246-250 (HNNHH). Residues 262-282 (WYQLDITWYLIWFFQALGLAT) traverse the membrane as a helical segment.

Belongs to the fatty acid desaturase type 1 family. The cofactor is Fe cation.

It localises to the endoplasmic reticulum membrane. Its pathway is lipid metabolism; polyunsaturated fatty acid biosynthesis. This chain is Delta-9 desaturase-like 2 protein, found in Arabidopsis thaliana (Mouse-ear cress).